We begin with the raw amino-acid sequence, 403 residues long: Anti-sigma-I factor RsgI8 (403 aa).

Residues M1–R59 lie on the Cytoplasmic side of the membrane. Positions Q4–K51 constitute a RsgI N-terminal anti-sigma domain. The helical transmembrane segment at I60–N80 threads the bilayer. The Extracellular segment spans residues N81–P403. 3 stretches are compositionally biased toward basic and acidic residues: residues V254–K314, L324–T335, and V349–P403. The segment at V254–P403 is disordered.

In terms of assembly, interacts (via RsgI N-terminal anti-sigma domain) with SigI8.

The protein localises to the cell membrane. Anti-sigma factor for SigI8. Negatively regulates SigI8 activity through direct interaction. The protein is Anti-sigma-I factor RsgI8 of Acetivibrio thermocellus (strain ATCC 27405 / DSM 1237 / JCM 9322 / NBRC 103400 / NCIMB 10682 / NRRL B-4536 / VPI 7372) (Clostridium thermocellum).